A 185-amino-acid polypeptide reads, in one-letter code: Ribosome-recycling factor (185 aa).

This sequence belongs to the RRF family.

It localises to the cytoplasm. In terms of biological role, responsible for the release of ribosomes from messenger RNA at the termination of protein biosynthesis. May increase the efficiency of translation by recycling ribosomes from one round of translation to another. The chain is Ribosome-recycling factor from Streptococcus mutans serotype c (strain ATCC 700610 / UA159).